The primary structure comprises 336 residues: Deoxyhypusine hydroxylase (336 aa).

HEAT-like PBS-type repeat units lie at residues 68–94 (LKHELAYCLGQTRNTDALPFLLDVVQD) and 101–127 (CRHEAAEALGALGYESSLEVLKALRDN). Residues H70, E71, H103, and E104 each coordinate Fe cation. The interval 158–179 (LKPSDFTSIDPAPPMPLTAKEP) is disordered. HEAT-like PBS-type repeat units lie at residues 235-261 (FRHEIAFVFGQLCHPASVPSLTETLSD) and 268-295 (VRHEAAEALGSLGDVEGVEDTLKKFLND). The Fe cation site is built by H237, E238, H270, and E271.

It belongs to the deoxyhypusine hydroxylase family. Fe(2+) is required as a cofactor.

It localises to the cytoplasm. The protein resides in the nucleus. It carries out the reaction [eIF5A protein]-deoxyhypusine + AH2 + O2 = [eIF5A protein]-hypusine + A + H2O. It participates in protein modification; eIF5A hypusination. Its function is as follows. Catalyzes the hydroxylation of the N(6)-(4-aminobutyl)-L-lysine intermediate to form hypusine, an essential post-translational modification only found in mature eIF-5A factor. The protein is Deoxyhypusine hydroxylase (lia1) of Emericella nidulans (strain FGSC A4 / ATCC 38163 / CBS 112.46 / NRRL 194 / M139) (Aspergillus nidulans).